A 275-amino-acid chain; its full sequence is uncharacterized protein (275 aa).

6 helical membrane-spanning segments follow: residues 25–45 (LGYFAFGGVFILLGVLAFMTA), 70–90 (LLFFIGIGLIGYVIWMVLSAI), 107–127 (IGNFFSAAVYTSIAWNALRFV), 149–169 (FGQWLTGLTGAGFIVFAIVQF), 203–223 (IARAIIFSAIGYFLIKTAMTA), and 247–267 (ILSILALGLILYGMYAIMKGI).

The protein resides in the cell membrane. This is an uncharacterized protein from Bacillus subtilis (strain 168).